The sequence spans 237 residues: MELTWHGHSTWHVNVDGTTFLIDPFFSNPHTERKPTDIKKPDYVLLTHAHADHIGDADVFTDTTVVGVPEMTGYMESEVGFTESIGMNIGGTVECGDAYVTMHRADHTNGLETDYEYSIGVPTGYIISDNKPTRTADTDSTSFYHAGDTGLMSEMKDVIGTYLEPDAAALPTGDHFTMGPTQAAIAAEWLDVDHVFPMHYDTFGPIEIDINELVEEVGSGDTDATVHVLDGDETFIL.

The protein belongs to the UPF0173 family.

The chain is UPF0173 metal-dependent hydrolase HQ_3368A from Haloquadratum walsbyi (strain DSM 16790 / HBSQ001).